Reading from the N-terminus, the 345-residue chain is MKAIPTFTISVRQIESLSQIEEKLNNLSLTAKNNIDNASTHEELDKLRVSLLGKKGDLSIILKIMGQLSAAERPIVGQKANFIKINLQDLLNKRKNQLNNEALDQQIKNEKIDVTIPSIGTPPGSKHPLISTQDEIIDIFCGLGYTVESGPEIESDFYNFESLNIPKNHPARDMQDTFYLDENRLLRTHTSPVQIRYLEKNPPPVRIIAPGRVYRRDAVDATHSPVFNQVEVLCIDQDINFSHLRGTVLTFLKTFFGDIPVRFRASYFPFTEPSAEVDVQWKGKWLEVMGCGMVDPKVLEKLGIDSEKWTGFAAGLGVERFCMVRHQIDDIRKFYTNDLRFLEQF.

Residue Glu272 participates in Mg(2+) binding.

This sequence belongs to the class-II aminoacyl-tRNA synthetase family. Phe-tRNA synthetase alpha subunit type 1 subfamily. Tetramer of two alpha and two beta subunits. Requires Mg(2+) as cofactor.

The protein localises to the cytoplasm. It carries out the reaction tRNA(Phe) + L-phenylalanine + ATP = L-phenylalanyl-tRNA(Phe) + AMP + diphosphate + H(+). The polypeptide is Phenylalanine--tRNA ligase alpha subunit (Prochlorococcus marinus (strain MIT 9312)).